A 453-amino-acid polypeptide reads, in one-letter code: Serine/threonine-protein phosphatase 2A regulatory subunit B'' subunit gamma (453 aa).

Positions 1–27 (MDWKDVLRRRLASPNSDPKRKKSEQEL) are disordered. EF-hand domains follow at residues 273 to 308 (PSAL…TMTN) and 341 to 376 (KEPA…IQEL). Ca(2+) is bound by residues aspartate 286, aspartate 288, asparagine 290, methionine 292, and glutamate 297.

As to quaternary structure, interacts with MCM3AP/GANP, PPP5C, and the phosphatase 2A core enzyme composed of the PPP2CA catalytic subunit and the constant regulatory subunit PPP2R1A. Finds in a complex with ABCB1, TFPI2 and PPP2R3C; leading to the dephosphorylation of ABCB1.

The protein localises to the nucleus. It is found in the cytoplasm. In terms of biological role, may regulate MCM3AP phosphorylation through phosphatase recruitment. May act as a negative regulator of ABCB1 expression and function through the dephosphorylation of ABCB1 by TFPI2/PPP2R3C complex. May play a role in the activation-induced cell death of B-cells. In Rattus norvegicus (Rat), this protein is Serine/threonine-protein phosphatase 2A regulatory subunit B'' subunit gamma (Ppp2r3c).